The following is a 232-amino-acid chain: Ribose-5-phosphate isomerase A (232 aa).

Substrate is bound by residues 28–31 (TGST), 83–86 (DGAD), and 96–99 (KGGG). The Proton acceptor role is filled by glutamate 105. Position 123 (lysine 123) interacts with substrate.

The protein belongs to the ribose 5-phosphate isomerase family. As to quaternary structure, homodimer.

The enzyme catalyses aldehydo-D-ribose 5-phosphate = D-ribulose 5-phosphate. It functions in the pathway carbohydrate degradation; pentose phosphate pathway; D-ribose 5-phosphate from D-ribulose 5-phosphate (non-oxidative stage): step 1/1. In terms of biological role, catalyzes the reversible conversion of ribose-5-phosphate to ribulose 5-phosphate. The protein is Ribose-5-phosphate isomerase A of Rhizobium leguminosarum bv. trifolii (strain WSM2304).